Consider the following 1057-residue polypeptide: Exportin-1 (1057 aa).

An Importin N-terminal domain is found at 36 to 102; sequence AQMVLGKFQE…KNYIVSLIIR (67 aa). HEAT repeat units follow at residues 239–275, 281–321, 462–501, 506–544, 551–588, 596–633, 739–776, 781–818, 855–892, 902–925, and 926–965; these read AEPS…LNLG, AVFI…FIHT, NTQH…AQNK, RFLV…QYPR, KFLK…QCKR, EESQ…YMIA, KETL…DYRT, TRDP…TTLS, QQFK…NVSK, KTYL…KSGF, and ALEC…YVKE.

The protein belongs to the exportin family. As to quaternary structure, component of a nuclear export receptor complex.

Its subcellular location is the nucleus. It is found in the cytoplasm. The protein localises to the perinuclear region. Its function is as follows. Mediates the nuclear export of cellular proteins (cargos) bearing a leucine-rich nuclear export signal (NES). The chain is Exportin-1 (xpo1) from Dictyostelium discoideum (Social amoeba).